The sequence spans 95 residues: Integration host factor subunit beta (95 aa).

It belongs to the bacterial histone-like protein family. As to quaternary structure, heterodimer of an alpha and a beta chain.

Its function is as follows. This protein is one of the two subunits of integration host factor, a specific DNA-binding protein that functions in genetic recombination as well as in transcriptional and translational control. The sequence is that of Integration host factor subunit beta from Shewanella pealeana (strain ATCC 700345 / ANG-SQ1).